The chain runs to 234 residues: Leucyl/phenylalanyl-tRNA--protein transferase (234 aa).

Belongs to the L/F-transferase family.

Its subcellular location is the cytoplasm. It catalyses the reaction N-terminal L-lysyl-[protein] + L-leucyl-tRNA(Leu) = N-terminal L-leucyl-L-lysyl-[protein] + tRNA(Leu) + H(+). The catalysed reaction is N-terminal L-arginyl-[protein] + L-leucyl-tRNA(Leu) = N-terminal L-leucyl-L-arginyl-[protein] + tRNA(Leu) + H(+). The enzyme catalyses L-phenylalanyl-tRNA(Phe) + an N-terminal L-alpha-aminoacyl-[protein] = an N-terminal L-phenylalanyl-L-alpha-aminoacyl-[protein] + tRNA(Phe). Functions in the N-end rule pathway of protein degradation where it conjugates Leu, Phe and, less efficiently, Met from aminoacyl-tRNAs to the N-termini of proteins containing an N-terminal arginine or lysine. The chain is Leucyl/phenylalanyl-tRNA--protein transferase from Pectobacterium carotovorum subsp. carotovorum (strain PC1).